A 416-amino-acid chain; its full sequence is Phosphoglycerate kinase (416 aa).

Substrate is bound by residues D24–N26, R40, H63–R66, R126, and R166. Residues K216, G304, E335, and G364–S367 contribute to the ATP site.

It belongs to the phosphoglycerate kinase family. Monomer.

Its subcellular location is the cytoplasm. It catalyses the reaction (2R)-3-phosphoglycerate + ATP = (2R)-3-phospho-glyceroyl phosphate + ADP. Its pathway is carbohydrate degradation; glycolysis; pyruvate from D-glyceraldehyde 3-phosphate: step 2/5. The chain is Phosphoglycerate kinase from Mycobacterium leprae (strain Br4923).